A 472-amino-acid polypeptide reads, in one-letter code: Maintenance of mitochondrial morphology protein 1 (472 aa).

At 1–22 (MAFQQGEAAPVSTQSSLSFTQG) the chain is on the lumenal side. A helical transmembrane segment spans residues 23 to 43 (FLLGQLSVVLLIGAFIKFFIF). At 44-472 (GEAPPPPSRG…GSMPEAPGAQ (429 aa)) the chain is on the cytoplasmic side. 3 disordered regions span residues 51-92 (SRGL…VPSS), 270-303 (LHTP…PKSS), and 370-472 (RMGR…PGAQ). A compositionally biased stretch (polar residues) spans 81 to 92 (STSNVLRPVPSS). In terms of domain architecture, SMP-LTD spans 124 to 365 (QPESLDWFNV…EPRVQVVGLP (242 aa)). Positions 270–280 (LHTPSPMPSPP) are enriched in pro residues. Over residues 281 to 297 (TAGAQPAAGAQPTDGGD) the composition is skewed to low complexity. Positions 450–460 (TRERSLGDDFH) are enriched in basic and acidic residues.

Belongs to the MMM1 family. Homodimer. Component of the ER-mitochondria encounter structure (ERMES) or MDM complex, composed of mmm1, mdm10, mdm12 and mdm34. A mmm1 homodimer associates with one molecule of mdm12 on each side in a pairwise head-to-tail manner, and the SMP-LTD domains of mmm1 and mdm12 generate a continuous hydrophobic tunnel for phospholipid trafficking.

It is found in the endoplasmic reticulum membrane. Functionally, component of the ERMES/MDM complex, which serves as a molecular tether to connect the endoplasmic reticulum (ER) and mitochondria. Components of this complex are involved in the control of mitochondrial shape and protein biogenesis, and function in nonvesicular lipid trafficking between the ER and mitochondria. The mdm12-mmm1 subcomplex functions in the major beta-barrel assembly pathway that is responsible for biogenesis of all outer membrane beta-barrel proteins, and acts in a late step after the SAM complex. The mdm10-mdm12-mmm1 subcomplex further acts in the TOM40-specific pathway after the action of the mdm12-mmm1 complex. Essential for establishing and maintaining the structure of mitochondria and maintenance of mtDNA nucleoids. The chain is Maintenance of mitochondrial morphology protein 1 from Emericella nidulans (strain FGSC A4 / ATCC 38163 / CBS 112.46 / NRRL 194 / M139) (Aspergillus nidulans).